A 269-amino-acid polypeptide reads, in one-letter code: Hemin import ATP-binding protein HmuV (269 aa).

The region spanning 2 to 242 (LEVIHTGLNI…AMVEACFDLP (241 aa)) is the ABC transporter domain. 34-41 (GPNGAGKS) lines the ATP pocket.

The protein belongs to the ABC transporter superfamily. Heme (hemin) importer (TC 3.A.1.14.5) family. As to quaternary structure, the complex is composed of two ATP-binding proteins (HmuV), two transmembrane proteins (HmuU) and a solute-binding protein (HmuT).

The protein localises to the cell inner membrane. Its function is as follows. Part of the ABC transporter complex HmuTUV involved in hemin import. Responsible for energy coupling to the transport system. The protein is Hemin import ATP-binding protein HmuV of Methylobacillus flagellatus (strain ATCC 51484 / DSM 6875 / VKM B-1610 / KT).